The following is a 713-amino-acid chain: Ribosomal RNA large subunit methyltransferase K/L (713 aa).

The THUMP domain occupies 43-154; that stretch reads LAYRITLWTR…NGVITIAMNF (112 aa).

Belongs to the methyltransferase superfamily. RlmKL family.

Its subcellular location is the cytoplasm. The enzyme catalyses guanosine(2445) in 23S rRNA + S-adenosyl-L-methionine = N(2)-methylguanosine(2445) in 23S rRNA + S-adenosyl-L-homocysteine + H(+). It carries out the reaction guanosine(2069) in 23S rRNA + S-adenosyl-L-methionine = N(2)-methylguanosine(2069) in 23S rRNA + S-adenosyl-L-homocysteine + H(+). Its function is as follows. Specifically methylates the guanine in position 2445 (m2G2445) and the guanine in position 2069 (m7G2069) of 23S rRNA. The polypeptide is Ribosomal RNA large subunit methyltransferase K/L (Shewanella sp. (strain MR-4)).